The primary structure comprises 255 residues: Probable transcriptional regulatory protein PCC8801_2028 (255 aa).

Belongs to the TACO1 family.

The protein resides in the cytoplasm. The sequence is that of Probable transcriptional regulatory protein PCC8801_2028 from Rippkaea orientalis (strain PCC 8801 / RF-1) (Cyanothece sp. (strain PCC 8801)).